The chain runs to 468 residues: ERO1-like protein alpha (468 aa).

Positions 1 to 23 (MGRRWGFLIGFLVAVGLLGLGHG) are cleaved as a signal peptide. 8 disulfides stabilise this stretch: Cys35/Cys48, Cys37/Cys46, Cys85/Cys391, Cys94/Cys99, Cys94/Cys131, Cys99/Cys104, Cys208/Cys241, and Cys394/Cys397. A phosphoserine mark is found at Ser106, Ser143, and Ser145. FAD contacts are provided by Arg187, Thr189, and Trp200. The FAD site is built by Ser252 and His255. Asn280 carries N-linked (GlcNAc...) asparagine glycosylation. FAD is bound by residues Arg287 and Arg300. N-linked (GlcNAc...) asparagine glycosylation occurs at Asn384.

It belongs to the EROs family. As to quaternary structure, predominantly monomer. May function both as a monomer and a homodimer. Interacts with PDILT. Interacts with ERP44; the interaction results in retention of ERO1A in the endoplasmic reticulum. FAD serves as cofactor. The Cys-94/Cys-99 and Cys-394/Cys-397 disulfide bonds constitute the redox-active center. The Cys-94/Cys-99 disulfide bond may accept electron from P4HB and funnel them to the active site disulfide Cys-394/Cys-397. The regulatory Cys-99/Cys-104 disulfide bond stabilizes the other regulatory bond Cys-94/Cys-131. In terms of processing, phosphorylated on Ser-145 by FAM20C in the Golgi which increases its enzymatic activity. Phosphorylation is induced by lactation. It is also induced by hypoxia and reductive stress.

The protein localises to the endoplasmic reticulum membrane. It localises to the golgi apparatus lumen. It is found in the secreted. Its subcellular location is the cell projection. The protein resides in the dendrite. With respect to regulation, enzyme activity is tightly regulated to prevent the accumulation of reactive oxygen species in the endoplasmic reticulum. Reversibly down-regulated by the formation of disulfide bonds between the active site Cys-94 and Cys-131, and between Cys-99 and Cys-104. Glutathione may be required to regulate its activity in the endoplasmic reticulum. Oxidoreductase involved in disulfide bond formation in the endoplasmic reticulum. Efficiently reoxidizes P4HB/PDI, the enzyme catalyzing protein disulfide formation, in order to allow P4HB to sustain additional rounds of disulfide formation. Following P4HB reoxidation, passes its electrons to molecular oxygen via FAD, leading to the production of reactive oxygen species (ROS) in the cell. Required for the proper folding of immunoglobulins. Plays an important role in ER stress-induced, CHOP-dependent apoptosis by activating the inositol 1,4,5-trisphosphate receptor IP3R1. The protein is ERO1-like protein alpha of Bos taurus (Bovine).